The following is a 415-amino-acid chain: Adenylosuccinate synthetase (415 aa).

Residues 12-18 and 40-42 each bind GTP; these read GDEGKGK and GHT. The active-site Proton acceptor is the Asp13. Mg(2+) is bound by residues Asp13 and Gly40. IMP-binding positions include 13–16, 38–41, Thr125, Arg139, Gln219, Thr234, and Arg298; these read DEGK and NAGH. His41 serves as the catalytic Proton donor. 294 to 300 serves as a coordination point for substrate; it reads TTTGRPR. Residues Arg300, 326 to 328, and 404 to 406 each bind GTP; these read KLD and STG.

This sequence belongs to the adenylosuccinate synthetase family. Homodimer. Requires Mg(2+) as cofactor.

It localises to the cytoplasm. It catalyses the reaction IMP + L-aspartate + GTP = N(6)-(1,2-dicarboxyethyl)-AMP + GDP + phosphate + 2 H(+). It participates in purine metabolism; AMP biosynthesis via de novo pathway; AMP from IMP: step 1/2. Its function is as follows. Plays an important role in the de novo pathway of purine nucleotide biosynthesis. Catalyzes the first committed step in the biosynthesis of AMP from IMP. The sequence is that of Adenylosuccinate synthetase from Wolinella succinogenes (strain ATCC 29543 / DSM 1740 / CCUG 13145 / JCM 31913 / LMG 7466 / NCTC 11488 / FDC 602W) (Vibrio succinogenes).